The following is a 27-amino-acid chain: Morintide mO5 (27 aa).

Positions 1-27 constitute a Chitin-binding type-1 domain; sequence NGLCCSQYGFCGTTSQYCSRANGCQSN. Cysteines 4 and 18 form a disulfide.

In terms of tissue distribution, seeds (at protein level).

Its function is as follows. Chitin-binding protein which functions in defense against chitin-containing fungal pathogens. The polypeptide is Morintide mO5 (Moringa oleifera (Horseradish tree)).